A 68-amino-acid chain; its full sequence is Large ribosomal subunit protein bL31 (68 aa).

Residues cysteine 17, cysteine 19, cysteine 37, and cysteine 40 each coordinate Zn(2+).

It belongs to the bacterial ribosomal protein bL31 family. Type A subfamily. Part of the 50S ribosomal subunit. Zn(2+) is required as a cofactor.

Functionally, binds the 23S rRNA. This Clostridium perfringens (strain ATCC 13124 / DSM 756 / JCM 1290 / NCIMB 6125 / NCTC 8237 / Type A) protein is Large ribosomal subunit protein bL31.